Here is a 451-residue protein sequence, read N- to C-terminus: Plasmepsin III (451 aa).

Topologically, residues 1–37 are cytoplasmic; it reads MNLTIKEEDFTNTFMKNEESFNTFRVTKVKRWNAKRL. Residues 1-123 constitute a propeptide that is removed on maturation; that stretch reads MNLTIKEEDF…KGLTKKSYLG (123 aa). Residues 38-58 form a helical; Signal-anchor for type II membrane protein membrane-spanning segment; that stretch reads FKILFVTVFIVLAGGFSYYIF. Residues 59 to 451 lie on the Lumenal side of the membrane; it reads ENFVFQKNRK…TVGFALAKNL (393 aa). A Peptidase A1 domain is found at 139–446; it reads SFGEAKLGDN…DYDNHTVGFA (308 aa). 2 disulfides stabilise this stretch: Cys-170–Cys-175 and Cys-372–Cys-408.

It belongs to the peptidase A1 family. As to quaternary structure, probable homodimer; in the zymogen form. Monomer; in the active form. Acidification disrupts homodimerization. Component of the hemozoin formation complex (HFC) composed of falcipains FP2A and/or FP2B, plasmepsins PMII, PMIII/HAP and PMIV, heme detoxifying protein HDP and falcilysin FLN. The HFC complex is involved in hemoglobin degradation and detoxification of heme in the food vacuole during the asexual blood stage. Proteolytically cleaved into the soluble active mature form by cysteine proteases in the digestive vacuole of trophozoites. Proteolysis requires an acidic environment. Transprocessing may serve as an alternate activation system.

Its subcellular location is the membrane. It localises to the vacuole lumen. It carries out the reaction Hydrolysis of the bonds linking certain hydrophobic residues in hemoglobin or globin. Also cleaves small molecules substrates such as Ala-Leu-Glu-Arg-Thr-Phe-|-Phe(NO2)-Ser-Phe-Pro-Thr.. Dimerization causes loss of catalytic activity. Inhibited by pepstatin A. Inhibited by Zn(2+). Functionally, during the asexual blood stage, catalyzes the cleavage of denatured host hemoglobin (Hb) or globins. Digestion of host Hb is an essential step which provides the parasite with amino acids for protein synthesis, and regulates osmolarity. This is Plasmepsin III from Plasmodium falciparum (isolate 3D7).